Reading from the N-terminus, the 448-residue chain is Proton extrusion protein PxcA (448 aa).

4 consecutive transmembrane segments (helical) span residues 231–251 (ILLLIIIPLLIHQLTKTFFLI), 323–343 (IDSIANIFADLFSFIAFVLVL), 372–392 (LIILFTDMFVGFHSPHGWEVI), and 408–428 (FNFLFIATFPVILDTVLKYWI).

Belongs to the CemA family.

Its subcellular location is the cell inner membrane. Functionally, required for H(+) efflux immediately after light irradiation to form a rapid H(+) concentration gradient across the thylakoid membranes. Together with PxcL, contributes to transient H(+) uptake following dark to light transition. The chain is Proton extrusion protein PxcA from Rippkaea orientalis (strain PCC 8801 / RF-1) (Cyanothece sp. (strain PCC 8801)).